Here is a 97-residue protein sequence, read N- to C-terminus: uncharacterized protein (97 aa).

This is an uncharacterized protein from Bacillus subtilis (strain 168).